Reading from the N-terminus, the 217-residue chain is Probable GTP-binding protein EngB (217 aa).

Residues A37–E214 form the EngB-type G domain. GTP-binding positions include G45–S52, G72–E76, D92–G95, T159–D162, and T193–S195. 2 residues coordinate Mg(2+): S52 and T74.

Belongs to the TRAFAC class TrmE-Era-EngA-EngB-Septin-like GTPase superfamily. EngB GTPase family. Mg(2+) serves as cofactor.

Its function is as follows. Necessary for normal cell division and for the maintenance of normal septation. The polypeptide is Probable GTP-binding protein EngB (Rhodopseudomonas palustris (strain BisB5)).